The following is a 152-amino-acid chain: Xanthine-guanine phosphoribosyltransferase (152 aa).

5-phospho-alpha-D-ribose 1-diphosphate is bound by residues 37–38 (RG), R69, and 88–96 (DDLVDTGGT). R69 provides a ligand contact to GMP. D89 provides a ligand contact to Mg(2+). Guanine-binding residues include D92 and I135. Xanthine contacts are provided by D92 and I135. GMP-binding positions include 92-96 (DTGGT) and 134-135 (WI).

Belongs to the purine/pyrimidine phosphoribosyltransferase family. XGPT subfamily. Homotetramer. Mg(2+) serves as cofactor.

The protein localises to the cell inner membrane. It catalyses the reaction GMP + diphosphate = guanine + 5-phospho-alpha-D-ribose 1-diphosphate. The catalysed reaction is XMP + diphosphate = xanthine + 5-phospho-alpha-D-ribose 1-diphosphate. The enzyme catalyses IMP + diphosphate = hypoxanthine + 5-phospho-alpha-D-ribose 1-diphosphate. Its pathway is purine metabolism; GMP biosynthesis via salvage pathway; GMP from guanine: step 1/1. It functions in the pathway purine metabolism; XMP biosynthesis via salvage pathway; XMP from xanthine: step 1/1. Its function is as follows. Purine salvage pathway enzyme that catalyzes the transfer of the ribosyl-5-phosphate group from 5-phospho-alpha-D-ribose 1-diphosphate (PRPP) to the N9 position of the 6-oxopurines guanine and xanthine to form the corresponding ribonucleotides GMP (guanosine 5'-monophosphate) and XMP (xanthosine 5'-monophosphate), with the release of PPi. To a lesser extent, also acts on hypoxanthine. The sequence is that of Xanthine-guanine phosphoribosyltransferase from Erwinia tasmaniensis (strain DSM 17950 / CFBP 7177 / CIP 109463 / NCPPB 4357 / Et1/99).